We begin with the raw amino-acid sequence, 459 residues long: MAPLRPLLMLALLAWVALADQESCKGRCTDGFIAERKCQCDELCSYYQSCCTDYVAECKPQVTRGDVFLQPDDEYRAYDYHEETRHNTSVQEEQRIPVLLAKTEETPVLKPEEEAPPPGPQTDDLGVPEEELCSGKPFDAFTNLKNGSVFAFRGLYCYELDEKAVRPGYPKLIQDVWGIKGPIDAAFTRINCQGKTYLFKGSQYWRFDDGVLDPNYPREISEGFKGIPDDVDAALALPAHSYSGRERVYFFKGKQYWEYVFQQQPSREECEGSSPSDVFAHFALMQRDSWEDIFRLLFWSHSFGGAIEPRVISQDWLGLPEQVDAAMAGQIYISGSALKPSQPKMTKSARRSGKRYRSRRGRGRGRGHSRSQKSHRQSRSTWLPWFSSEETGPGGYNYDDYKMDWLVPATCEPIQSVYFFSGEEYYRVNLRTQRVDTVTPPYPRSIAQYWLGCPVPDQK.

Residues 1–19 (MAPLRPLLMLALLAWVALA) form the signal peptide. In terms of domain architecture, SMB spans 20-63 (DQESCKGRCTDGFIAERKCQCDELCSYYQSCCTDYVAECKPQVT). Cystine bridges form between cysteine 24–cysteine 28, cysteine 24–cysteine 40, cysteine 28–cysteine 58, cysteine 38–cysteine 40, cysteine 38–cysteine 51, cysteine 44–cysteine 50, and cysteine 51–cysteine 58. The Cell attachment site motif lies at 64 to 66 (RGD). Tyrosine 75, tyrosine 78, and tyrosine 80 each carry sulfotyrosine. N-linked (GlcNAc...) asparagine glycosylation is found at asparagine 87 and asparagine 146. Hemopexin repeat units follow at residues 135–179 (GKPF…VWGI), 180–227 (KGPI…FKGI), and 228–285 (PDDV…FALM). A phosphoserine mark is found at serine 289 and serine 378. Residues 338–380 (LKPSQPKMTKSARRSGKRYRSRRGRGRGRGHSRSQKSHRQSRS) are disordered. A compositionally biased stretch (basic residues) spans 347–378 (KSARRSGKRYRSRRGRGRGRGHSRSQKSHRQS). Sulfotyrosine occurs at positions 398 and 401. Residues 400–453 (DYKMDWLVPATCEPIQSVYFFSGEEYYRVNLRTQRVDTVTPPYPRSIAQYWLGC) form a Hemopexin 4 repeat.

Monomer. Interacts with SERPINE1/PAI1 and C1QBP. Post-translationally, sulfated on tyrosine residues. N- and O-glycosylated. In terms of processing, it has been suggested that the active SMB domain may be permitted considerable disulfide bond heterogeneity or variability, thus two alternate disulfide patterns based on 3D structures are described with 1 disulfide bond conserved in both. As to expression, plasma.

It is found in the secreted. The protein resides in the extracellular space. Vitronectin is a cell adhesion and spreading factor found in serum and tissues. Vitronectin interact with glycosaminoglycans and proteoglycans. Is recognized by certain members of the integrin family and serves as a cell-to-substrate adhesion molecule. Inhibitor of the membrane-damaging effect of the terminal cytolytic complement pathway. This is Vitronectin (VTN) from Sus scrofa (Pig).